A 324-amino-acid polypeptide reads, in one-letter code: tRNA dimethylallyltransferase (324 aa).

17–24 (GPTASGKT) contributes to the ATP binding site. 19-24 (TASGKT) lines the substrate pocket. Interaction with substrate tRNA stretches follow at residues 42–45 (DSAL), 166–170 (QRIQR), and 251–256 (RCVGYR).

The protein belongs to the IPP transferase family. As to quaternary structure, monomer. Requires Mg(2+) as cofactor.

It carries out the reaction adenosine(37) in tRNA + dimethylallyl diphosphate = N(6)-dimethylallyladenosine(37) in tRNA + diphosphate. Catalyzes the transfer of a dimethylallyl group onto the adenine at position 37 in tRNAs that read codons beginning with uridine, leading to the formation of N6-(dimethylallyl)adenosine (i(6)A). The chain is tRNA dimethylallyltransferase from Burkholderia pseudomallei (strain 668).